Consider the following 215-residue polypeptide: Pyrophosphatase PpaX (215 aa).

Catalysis depends on D9, which acts as the Nucleophile.

This sequence belongs to the HAD-like hydrolase superfamily. PpaX family. Requires Mg(2+) as cofactor.

The catalysed reaction is diphosphate + H2O = 2 phosphate + H(+). Hydrolyzes pyrophosphate formed during P-Ser-HPr dephosphorylation by HPrK/P. Might play a role in controlling the intracellular pyrophosphate pool. In Halalkalibacterium halodurans (strain ATCC BAA-125 / DSM 18197 / FERM 7344 / JCM 9153 / C-125) (Bacillus halodurans), this protein is Pyrophosphatase PpaX.